A 130-amino-acid polypeptide reads, in one-letter code: Ribosome-binding factor A (130 aa).

It belongs to the RbfA family. In terms of assembly, monomer. Binds 30S ribosomal subunits, but not 50S ribosomal subunits or 70S ribosomes.

It is found in the cytoplasm. Its function is as follows. One of several proteins that assist in the late maturation steps of the functional core of the 30S ribosomal subunit. Associates with free 30S ribosomal subunits (but not with 30S subunits that are part of 70S ribosomes or polysomes). Required for efficient processing of 16S rRNA. May interact with the 5'-terminal helix region of 16S rRNA. The protein is Ribosome-binding factor A of Roseiflexus sp. (strain RS-1).